We begin with the raw amino-acid sequence, 34 residues long: Photosystem II reaction center protein T (34 aa).

A helical transmembrane segment spans residues 3–23 (ALVYTFLLVSTLGIIFFAIFF).

The protein belongs to the PsbT family. In terms of assembly, PSII is composed of 1 copy each of membrane proteins PsbA, PsbB, PsbC, PsbD, PsbE, PsbF, PsbH, PsbI, PsbJ, PsbK, PsbL, PsbM, PsbT, PsbY, PsbZ, Psb30/Ycf12, at least 3 peripheral proteins of the oxygen-evolving complex and a large number of cofactors. It forms dimeric complexes.

The protein resides in the plastid. It localises to the chloroplast thylakoid membrane. Its function is as follows. Found at the monomer-monomer interface of the photosystem II (PS II) dimer, plays a role in assembly and dimerization of PSII. PSII is a light-driven water plastoquinone oxidoreductase, using light energy to abstract electrons from H(2)O, generating a proton gradient subsequently used for ATP formation. This Atropa belladonna (Belladonna) protein is Photosystem II reaction center protein T.